A 534-amino-acid chain; its full sequence is Ethanolamine kinase (534 aa).

Position 23 is a phosphoserine (Ser23).

Belongs to the choline/ethanolamine kinase family.

Its subcellular location is the cytoplasm. It catalyses the reaction ethanolamine + ATP = phosphoethanolamine + ADP + H(+). The catalysed reaction is choline + ATP = phosphocholine + ADP + H(+). It participates in phospholipid metabolism; phosphatidylethanolamine biosynthesis; phosphatidylethanolamine from ethanolamine: step 1/3. Functionally, catalyzes the committed step of phosphatidylethanolamine synthesis via the CDP-ethanolamine branch of the Kennedy pathway. Also exhibits choline kinase activity, thus contributing to phosphatidylcholine synthesis via the CDP-choline pathway, but its preferred substrate is ethanolamine. The polypeptide is Ethanolamine kinase (EKI1) (Saccharomyces cerevisiae (strain ATCC 204508 / S288c) (Baker's yeast)).